Here is a 357-residue protein sequence, read N- to C-terminus: Velvet complex subunit 2 (357 aa).

A Velvet domain is found at 32-341 (RRAERKYKLE…AQQGIKIPIR (310 aa)).

It belongs to the velvet family. VelB subfamily. As to quaternary structure, component of the heterotrimeric velvet complex composed of LAE1, VEL1 and VEL2; VEL1A acting as a bridging protein between LAE1 and VEL2. Forms a heterodimeric complex with VOS1; the formation of the VEL2-VOS1 complex is light-dependent.

It is found in the nucleus. The protein localises to the cytoplasm. Component of the velvet transcription factor complex that controls sexual/asexual developmental ratio in response to light, promoting sexual development in the darkness while stimulating asexual sporulation under illumination. The velvet complex acts as a global regulator for secondary metabolite gene expression. Component of the VEL2-VOS1 heterodimeric complex that plays a dual role in activating genes associated with spore maturation and repressing certain development-associated genes. The complex binds DNA through the DNA-binding domain of VOS1 that recognizes an 11-nucleotide consensus sequence 5'-CTGGCCGCGGC-3' consisting of two motifs in the promoters of key developmental regulatory genes. The VEL2-VOS1 complex is required for normal pseudothecium development and regulates asexual spore compartmentalization, pigmentation and germination. In Cochliobolus heterostrophus (strain C5 / ATCC 48332 / race O) (Southern corn leaf blight fungus), this protein is Velvet complex subunit 2.